A 486-amino-acid chain; its full sequence is dTDP-4-dehydro-6-deoxy-alpha-D-glucopyranose 2,3-dehydratase (486 aa).

DTDP-4-dehydro-6-deoxy-alpha-D-glucose contacts are provided by residues tryptophan 66, 149 to 153 (TRSNY), serine 187, tryptophan 304, arginine 367, 383 to 385 (QCS), 388 to 389 (NY), and 421 to 424 (EGGR).

Belongs to the hexose 2,3-dehydratase family. In terms of assembly, homodimer.

The enzyme catalyses dTDP-4-dehydro-6-deoxy-alpha-D-glucose = dTDP-3,4-didehydro-2,6-dideoxy-alpha-D-glucose + H2O. In terms of biological role, involved in the biosynthesis of forosamine ((4-dimethylamino)-2,3,4,6-tetradeoxy-alpha-D-threo-hexopyranose), a highly deoxygenated sugar component of several bioactive natural products such as the insecticidal spinosyns A and D. Catalyzes the removal of the hydroxyl group at position C-2 of the hexose ring of dTDP-4-dehydro-6-deoxy-alpha-D-glucopyranose, and the oxidation of the hydroxyl group at position C-3 to form a carbonyl functionality. The product of the reaction, dTDP-2,6-dideoxy-D-glycero-hex-2-enos-4-ulose, is a highly unstable diketosugar, which spontaneously forms dTDP-3,4-didehydro-2,6-dideoxy-alpha-D-glucose. This chain is dTDP-4-dehydro-6-deoxy-alpha-D-glucopyranose 2,3-dehydratase, found in Saccharopolyspora spinosa.